Consider the following 398-residue polypeptide: 1-deoxy-D-xylulose 5-phosphate reductoisomerase (398 aa).

T11, G12, S13, I14, and N125 together coordinate NADPH. Residue K126 coordinates 1-deoxy-D-xylulose 5-phosphate. E127 lines the NADPH pocket. D151 lines the Mn(2+) pocket. Residues S152, E153, S186, and H209 each contribute to the 1-deoxy-D-xylulose 5-phosphate site. Residue E153 coordinates Mn(2+). Residue G215 participates in NADPH binding. Residues S222, N227, K228, and E231 each coordinate 1-deoxy-D-xylulose 5-phosphate. Residue E231 participates in Mn(2+) binding.

The protein belongs to the DXR family. It depends on Mg(2+) as a cofactor. Requires Mn(2+) as cofactor.

It catalyses the reaction 2-C-methyl-D-erythritol 4-phosphate + NADP(+) = 1-deoxy-D-xylulose 5-phosphate + NADPH + H(+). It functions in the pathway isoprenoid biosynthesis; isopentenyl diphosphate biosynthesis via DXP pathway; isopentenyl diphosphate from 1-deoxy-D-xylulose 5-phosphate: step 1/6. Its function is as follows. Catalyzes the NADPH-dependent rearrangement and reduction of 1-deoxy-D-xylulose-5-phosphate (DXP) to 2-C-methyl-D-erythritol 4-phosphate (MEP). The protein is 1-deoxy-D-xylulose 5-phosphate reductoisomerase of Acinetobacter baumannii (strain AB307-0294).